A 1463-amino-acid polypeptide reads, in one-letter code: MGARNSVLRGKKADELEKIRLRPGGKKKYRLKHIVWAANELDRFGLAESLLESKEGCQKILTVLDPLVPTGSENLKSLFNTVCVIWCIHAEEKAKDTEEAKQKVQRHLVAETKTTEKMPSTSRPTAPPSGNGGNFPVQQVAGNYTHVPLSPRTLNAWVKLVEEKKFGAEVVPGFQALSEGCTPYDINQMLNCVGDHQAAMQIIREIINEEAADWDAQHPIPGPLPAGQLREPRGSDIAGTTSTVEEQIQWMFRPQNPVPVGSIYRRWIQIGLQKCVRMYNPTNILDIKQGPKEPFQSYVDRFYKSLRAEQTDPAVKNWMTQTLLVQNANPDCKLVLKGLGINPTLEEMLTACQGVGGPGQKARLMAEALKEAMAPAPIPFAAAQQRRTIKCWNCGKEGHSARQCRAPRRQGCWKCGKAGHIMAKCPERQAGFLRVGPMGKEAPQFPCGPNPAGADTNSTPDRPSRGPTREVHAAREKAERAEREAIQRSDRGLPAARETRDTMQRDDRGLAAPQFSLWKRPVVTAHVEGQPVEVLLDTGADDSIVAGVELGSNYSPKIVGGIGGFINTKEYKNVEIRVLNKRVRATIMTGDTPINIFGRNILTALGMSLNLPVAKIEPIKIMLKPGKDGPKLRQWPLTKEKIEALKEICEKMEREGQLEEAPPTNPYNTPTFAIKKKDKNKWRMLIDFRELNKVTQDFTEIQLGIPHPAGLAKKKRITVLDVGDAYFSIPLHEDFRQYTAFTLPSINNAEPGKRYIYKVSPQGWKGSPAIFQYTMRQVLEPFRKANPDIILIQYMDDILIASDRTDLEHDRVVLQLKELLNGLGFSTPDEKFQKDPPYQWMGYELWPTKWKLQRIQLPQKEVWTVNDIQKLVGVLNWAAQIYPGIKTRNLCRLIRGKMTLTEEVQWTELAEAELEENKIILSQEQEGCYYQEEKELEATVQKDQDNQWTYKIHQGGKILKVGKYAKVKNTHTNGVRLLAQVVQKIGKEALVIWGRIPKFHLPVERDTWEQWWDNYWQVTWIPDWDFISTPPLVRLVFNLVKDPILGAETFYTDGSCNKQSREGKAGYITDRGRDKVRLLEQTTNQQAELEAFAMAVTDSGPKANIIVDSQYVMGIVAGQPTESESKIVNQIIEEMIKKEAIYVAWVPAHKGIGGNQEVDHLVSQGIRQVLFLEKIEPAQEEHEKYHSNVKELSHKFGLPKLVARQIVNTCTQCQQKGEAIHGQVNAELGTWQMDCTHLEGKIIIVAVHVASGFIEAEVIPQESGRQTALFLLKLASRWPITHLHTDNGANFTSQEVKMVAWWIGIEQSFGVPYNPQSQGVVEAMNHHLKNQISRIREQANTVETIVLMAVHCMNFKRRGGIGDMTPAERLINMVTAEQEIQFLQAKNSKLQNFRVYFREGRDQLWKGPGELLWKGDGAVIVKVGADIKIIPRRKAKIIKDYGGRQEMDSGSNLEGAREDGEVA.

The N-myristoyl glycine; by host moiety is linked to residue Gly2. Positions 7-31 (VLRGKKADELEKIRLRPGGKKKYRL) are interaction with Gp41. The Nuclear export signal motif lies at 16-22 (LEKIRLR). The Nuclear localization signal signature appears at 26 to 32 (KKKYRLK). The interval 112 to 138 (TKTTEKMPSTSRPTAPPSGNGGNFPVQ) is disordered. The tract at residues 191–228 (NCVGDHQAAMQIIREIINEEAADWDAQHPIPGPLPAGQ) is interaction with human PPIA/CYPA and NUP153. A dimerization/Multimerization of capsid protein p24 region spans residues 279–365 (YNPTNILDIK…GGPGQKARLM (87 aa)). 2 CCHC-type zinc fingers span residues 389 to 406 (IKCW…QCRA) and 410 to 427 (QGCW…KCPE). The disordered stretch occupies residues 441–508 (EAPQFPCGPN…TRDTMQRDDR (68 aa)). Over residues 462 to 508 (RPSRGPTREVHAAREKAERAEREAIQRSDRGLPAARETRDTMQRDDR) the composition is skewed to basic and acidic residues. The dimerization of protease stretch occupies residues 513 to 517 (PQFSL). Positions 532-601 (VEVLLDTGAD…TPINIFGRNI (70 aa)) constitute a Peptidase A2 domain. Asp537 serves as the catalytic For protease activity; shared with dimeric partner. 2 dimerization of protease regions span residues 561 to 567 (GIGGFIN) and 600 to 612 (NILT…LNLP). The 191-residue stretch at 655–845 (EGQLEEAPPT…PPYQWMGYEL (191 aa)) folds into the Reverse transcriptase domain. Residues Asp721, Asp796, and Asp797 each coordinate Mg(2+). The interval 838 to 846 (YQWMGYELW) is RT 'primer grip'. Positions 1008–1024 (WEQWWDNYWQVTWIPDW) match the Tryptophan repeat motif motif. The region spanning 1044–1167 (ILGAETFYTD…VDHLVSQGIR (124 aa)) is the RNase H type-1 domain. Mg(2+) contacts are provided by Asp1053, Glu1088, Asp1108, and Asp1159. The segment at 1173–1214 (EKIEPAQEEHEKYHSNVKELSHKFGLPKLVARQIVNTCTQCQ) adopts an Integrase-type zinc-finger fold. His1182, His1186, Cys1210, and Cys1213 together coordinate Zn(2+). An Integrase catalytic domain is found at 1223 to 1374 (QVNAELGTWQ…TPAERLINMV (152 aa)). Residues Asp1234, Asp1286, and Glu1322 each coordinate Mg(2+). Residues 1393 to 1440 (FRVYFREGRDQLWKGPGELLWKGDGAVIVKVGADIKIIPRRKAKIIKD) constitute a DNA-binding region (integrase-type).

As to quaternary structure, homotrimer; further assembles as hexamers of trimers. Interacts with gp41 (via C-terminus). Interacts with host CALM1; this interaction induces a conformational change in the Matrix protein, triggering exposure of the myristate group. Interacts with host AP3D1; this interaction allows the polyprotein trafficking to multivesicular bodies during virus assembly. Part of the pre-integration complex (PIC) which is composed of viral genome, matrix protein, Vpr and integrase. In terms of assembly, homodimer; the homodimer further multimerizes as homohexamers or homopentamers. Interacts with human PPIA/CYPA. Interacts with human NUP153. Interacts with host PDZD8; this interaction stabilizes the capsid. Interacts with monkey TRIM5; this interaction destabilizes the capsid. Homodimer, whose active site consists of two apposed aspartic acid residues. As to quaternary structure, heterodimer of p66 RT and p51 RT (RT p66/p51). Heterodimerization of RT is essential for DNA polymerase activity. The overall folding of the subdomains is similar in p66 RT and p51 RT but the spatial arrangements of the subdomains are dramatically different. In terms of assembly, homotetramer; may further associate as a homohexadecamer. Part of the pre-integration complex (PIC) which is composed of viral genome, matrix protein, Vpr and integrase. Interacts with human SMARCB1/INI1 and human PSIP1/LEDGF isoform 1. Interacts with human KPNA3; this interaction might play a role in nuclear import of the pre-integration complex. Interacts with human NUP153; this interaction might play a role in nuclear import of the pre-integration complex. Mg(2+) serves as cofactor. Post-translationally, specific enzymatic cleavages by the viral protease yield mature proteins. The protease is released by autocatalytic cleavage. The polyprotein is cleaved during and after budding, this process is termed maturation. Proteolytic cleavage of p66 RT removes the RNase H domain to yield the p51 RT subunit. Nucleocapsid protein p7 might be further cleaved after virus entry.

The protein localises to the host cell membrane. It is found in the host endosome. The protein resides in the host multivesicular body. Its subcellular location is the virion membrane. It localises to the host nucleus. The protein localises to the host cytoplasm. It is found in the virion. The enzyme catalyses Endopeptidase for which the P1 residue is preferably hydrophobic.. It catalyses the reaction Endohydrolysis of RNA in RNA/DNA hybrids. Three different cleavage modes: 1. sequence-specific internal cleavage of RNA. Human immunodeficiency virus type 1 and Moloney murine leukemia virus enzymes prefer to cleave the RNA strand one nucleotide away from the RNA-DNA junction. 2. RNA 5'-end directed cleavage 13-19 nucleotides from the RNA end. 3. DNA 3'-end directed cleavage 15-20 nucleotides away from the primer terminus.. It carries out the reaction 3'-end directed exonucleolytic cleavage of viral RNA-DNA hybrid.. The catalysed reaction is DNA(n) + a 2'-deoxyribonucleoside 5'-triphosphate = DNA(n+1) + diphosphate. Its activity is regulated as follows. Protease: The viral protease is inhibited by many synthetic protease inhibitors (PIs), such as amprenavir, atazanavir, indinavir, loprinavir, nelfinavir, ritonavir and saquinavir. Use of protease inhibitors in tritherapy regimens permit more ambitious therapeutic strategies. Reverse transcriptase/ribonuclease H: RT can be inhibited either by nucleoside RT inhibitors (NRTIs) or by non nucleoside RT inhibitors (NNRTIs). NRTIs act as chain terminators, whereas NNRTIs inhibit DNA polymerization by binding a small hydrophobic pocket near the RT active site and inducing an allosteric change in this region. Classical NRTIs are abacavir, adefovir (PMEA), didanosine (ddI), lamivudine (3TC), stavudine (d4T), tenofovir (PMPA), zalcitabine (ddC), and zidovudine (AZT). Classical NNRTIs are atevirdine (BHAP U-87201E), delavirdine, efavirenz (DMP-266), emivirine (I-EBU), and nevirapine (BI-RG-587). The tritherapies used as a basic effective treatment of AIDS associate two NRTIs and one NNRTI. Functionally, mediates, with Gag polyprotein, the essential events in virion assembly, including binding the plasma membrane, making the protein-protein interactions necessary to create spherical particles, recruiting the viral Env proteins, and packaging the genomic RNA via direct interactions with the RNA packaging sequence (Psi). Gag-Pol polyprotein may regulate its own translation, by the binding genomic RNA in the 5'-UTR. At low concentration, the polyprotein would promote translation, whereas at high concentration, the polyprotein would encapsidate genomic RNA and then shut off translation. Its function is as follows. Targets the polyprotein to the plasma membrane via a multipartite membrane-binding signal, that includes its myristoylated N-terminus. Matrix protein is part of the pre-integration complex. Implicated in the release from host cell mediated by Vpu. Binds to RNA. Forms the conical core that encapsulates the genomic RNA-nucleocapsid complex in the virion. Most core are conical, with only 7% tubular. The core is constituted by capsid protein hexamer subunits. The core is disassembled soon after virion entry. Host restriction factors such as TRIM5-alpha or TRIMCyp bind retroviral capsids and cause premature capsid disassembly, leading to blocks in reverse transcription. Capsid restriction by TRIM5 is one of the factors which restricts HIV-1 to the human species. Host PIN1 apparently facilitates the virion uncoating. On the other hand, interactions with PDZD8 or CYPA stabilize the capsid. In terms of biological role, encapsulates and protects viral dimeric unspliced genomic RNA (gRNA). Binds these RNAs through its zinc fingers. Acts as a nucleic acid chaperone which is involved in rearangement of nucleic acid secondary structure during gRNA retrotranscription. Also facilitates template switch leading to recombination. As part of the polyprotein, participates in gRNA dimerization, packaging, tRNA incorporation and virion assembly. Functionally, aspartyl protease that mediates proteolytic cleavages of Gag and Gag-Pol polyproteins during or shortly after the release of the virion from the plasma membrane. Cleavages take place as an ordered, step-wise cascade to yield mature proteins. This process is called maturation. Displays maximal activity during the budding process just prior to particle release from the cell. Also cleaves Nef and Vif, probably concomitantly with viral structural proteins on maturation of virus particles. Hydrolyzes host EIF4GI and PABP1 in order to shut off the capped cellular mRNA translation. The resulting inhibition of cellular protein synthesis serves to ensure maximal viral gene expression and to evade host immune response. Its function is as follows. Multifunctional enzyme that converts the viral RNA genome into dsDNA in the cytoplasm, shortly after virus entry into the cell. This enzyme displays a DNA polymerase activity that can copy either DNA or RNA templates, and a ribonuclease H (RNase H) activity that cleaves the RNA strand of RNA-DNA heteroduplexes in a partially processive 3' to 5' endonucleasic mode. Conversion of viral genomic RNA into dsDNA requires many steps. A tRNA(3)-Lys binds to the primer-binding site (PBS) situated at the 5'-end of the viral RNA. RT uses the 3' end of the tRNA primer to perform a short round of RNA-dependent minus-strand DNA synthesis. The reading proceeds through the U5 region and ends after the repeated (R) region which is present at both ends of viral RNA. The portion of the RNA-DNA heteroduplex is digested by the RNase H, resulting in a ssDNA product attached to the tRNA primer. This ssDNA/tRNA hybridizes with the identical R region situated at the 3' end of viral RNA. This template exchange, known as minus-strand DNA strong stop transfer, can be either intra- or intermolecular. RT uses the 3' end of this newly synthesized short ssDNA to perform the RNA-dependent minus-strand DNA synthesis of the whole template. RNase H digests the RNA template except for two polypurine tracts (PPTs) situated at the 5'-end and near the center of the genome. It is not clear if both polymerase and RNase H activities are simultaneous. RNase H probably can proceed both in a polymerase-dependent (RNA cut into small fragments by the same RT performing DNA synthesis) and a polymerase-independent mode (cleavage of remaining RNA fragments by free RTs). Secondly, RT performs DNA-directed plus-strand DNA synthesis using the PPTs that have not been removed by RNase H as primers. PPTs and tRNA primers are then removed by RNase H. The 3' and 5' ssDNA PBS regions hybridize to form a circular dsDNA intermediate. Strand displacement synthesis by RT to the PBS and PPT ends produces a blunt ended, linear dsDNA copy of the viral genome that includes long terminal repeats (LTRs) at both ends. Catalyzes viral DNA integration into the host chromosome, by performing a series of DNA cutting and joining reactions. This enzyme activity takes place after virion entry into a cell and reverse transcription of the RNA genome in dsDNA. The first step in the integration process is 3' processing. This step requires a complex comprising the viral genome, matrix protein, Vpr and integrase. This complex is called the pre-integration complex (PIC). The integrase protein removes 2 nucleotides from each 3' end of the viral DNA, leaving recessed CA OH's at the 3' ends. In the second step, the PIC enters cell nucleus. This process is mediated through integrase and Vpr proteins, and allows the virus to infect a non dividing cell. This ability to enter the nucleus is specific of lentiviruses, other retroviruses cannot and rely on cell division to access cell chromosomes. In the third step, termed strand transfer, the integrase protein joins the previously processed 3' ends to the 5' ends of strands of target cellular DNA at the site of integration. The 5'-ends are produced by integrase-catalyzed staggered cuts, 5 bp apart. A Y-shaped, gapped, recombination intermediate results, with the 5'-ends of the viral DNA strands and the 3' ends of target DNA strands remaining unjoined, flanking a gap of 5 bp. The last step is viral DNA integration into host chromosome. This involves host DNA repair synthesis in which the 5 bp gaps between the unjoined strands are filled in and then ligated. Since this process occurs at both cuts flanking the HIV genome, a 5 bp duplication of host DNA is produced at the ends of HIV-1 integration. Alternatively, Integrase may catalyze the excision of viral DNA just after strand transfer, this is termed disintegration. The polypeptide is Gag-Pol polyprotein (gag-pol) (Human immunodeficiency virus type 2 subtype A (isolate ST) (HIV-2)).